The sequence spans 220 residues: 7-cyano-7-deazaguanine synthase (220 aa).

7–17 (LSGGMDSSITA) serves as a coordination point for ATP. Zn(2+) is bound by residues cysteine 185, cysteine 193, cysteine 196, and cysteine 199.

The protein belongs to the QueC family. Zn(2+) serves as cofactor.

The catalysed reaction is 7-carboxy-7-deazaguanine + NH4(+) + ATP = 7-cyano-7-deazaguanine + ADP + phosphate + H2O + H(+). It functions in the pathway purine metabolism; 7-cyano-7-deazaguanine biosynthesis. Functionally, catalyzes the ATP-dependent conversion of 7-carboxy-7-deazaguanine (CDG) to 7-cyano-7-deazaguanine (preQ(0)). The sequence is that of 7-cyano-7-deazaguanine synthase from Nitratiruptor sp. (strain SB155-2).